A 414-amino-acid chain; its full sequence is MSRAILIVLDSFGIGATADAQRFGDAGANTLLHIAEACAAGACDSQGRTGPLRLPNLNRLGLGRAGEASCGAAAPGLEQAPEIIGTYGFAEELSSGKDTPSGHWEIAGVPVLFDWGYFTDKQQSFPPELLDAIIKEARLPGVLGNVHASGTQIIKDLGMEHRATGKPIFYTSADSVVQIACHEETFGLQRLYELCQITRKHIDPYNIARVIARPFVGASPEGFRRTGARRDFATPPHKPTLLDKLNNHGKQVIAIGKISDIYAGKGVSRSVKADGLGALVEATLTVMNETDEAAAKQDTLIFTNLVDFDMLYGHRRDVTGYAKALEDFDAMLPDLLGAMMDDDLLILTADHGCDPTWPGSDHTREHIPILMYGKRAPHGFIGARKTFADIGQTLAEYFQLDRLDFGESFLVADK.

6 residues coordinate Mn(2+): aspartate 10, aspartate 309, histidine 314, aspartate 350, histidine 351, and histidine 362.

The protein belongs to the phosphopentomutase family. Mn(2+) is required as a cofactor.

Its subcellular location is the cytoplasm. It carries out the reaction 2-deoxy-alpha-D-ribose 1-phosphate = 2-deoxy-D-ribose 5-phosphate. It catalyses the reaction alpha-D-ribose 1-phosphate = D-ribose 5-phosphate. Its pathway is carbohydrate degradation; 2-deoxy-D-ribose 1-phosphate degradation; D-glyceraldehyde 3-phosphate and acetaldehyde from 2-deoxy-alpha-D-ribose 1-phosphate: step 1/2. Its function is as follows. Isomerase that catalyzes the conversion of deoxy-ribose 1-phosphate (dRib-1-P) and ribose 1-phosphate (Rib-1-P) to deoxy-ribose 5-phosphate (dRib-5-P) and ribose 5-phosphate (Rib-5-P), respectively. This is Phosphopentomutase from Hahella chejuensis (strain KCTC 2396).